The following is a 399-amino-acid chain: Dof zinc finger protein DOF5.1 (399 aa).

A Dof-type zinc finger spans residues 95–149 (LKCPRCDSTNTKFCYFNNYSLTQPRHFCKACRRYWTRGGALRSVPVGGGCRRNKR). Residues cysteine 97, cysteine 100, cysteine 122, and cysteine 125 each contribute to the Zn(2+) site. The disordered stretch occupies residues 139 to 176 (PVGGGCRRNKRTKNSSGGGGGSTSSGNSKSQDSATSND).

Expressed ubiquitously, especially in the vascular tissues, except in seeds, petals and anthers. Specific to the vascular tissues in young leaves, cotyledons and flower buds. The PEAR proteins (e.g. DOF2.4, DOF5.1, DOF3.2, DOF1.1, DOF5.6 and DOF5.3) form a short-range concentration gradient that peaks at protophloem sieve elements (PSE).

The protein localises to the nucleus. Functionally, transcription factor that binds specifically to a 5'-AA[AG]G-3' consensus core sequence. Binds to 5'-TAAAGT-3' motif in REV promoter to triggers its transcription, thus regulating adaxial-abaxial polarity and influencing leaf axial patterning in an auxin transport- and response-dependent manner (e.g. IAA6 and IAA19 genes expression). Probably involved in early processes for vascular development. The PEAR proteins (e.g. DOF2.4, DOF5.1, DOF3.2, DOF1.1, DOF5.6 and DOF5.3) activate gene expression that promotes radial growth of protophloem sieve elements. The chain is Dof zinc finger protein DOF5.1 from Arabidopsis thaliana (Mouse-ear cress).